The primary structure comprises 479 residues: MNRNPDQNTFPNITLKIIETYLSRVPSVNEYHMLKLQARNIQKITVFNKDIFVSLVKKNKKRFFSDVNTSASEIKDRILSYFSKQTQTYNIGKLFTIIELQSVLVTTYTDILGVLTIKAPNVISSKISYNVTSMEELARDMLNSMNVAIIDKAKVMGRHNVSSLVKNVNKLMEEYLRRHNKSCICYGSYSLYLINPNILYGDIDILQTNSRTFLIDLAFLIKFITGNNIILSKIPYLRNYMVIKDENDNHIIDSFNIRQDTMNVVPKIFIDNIYIVDPTFQLLNMIKMFSQIDRLEDLSKDPEKFNARMATMLEYVRYTHGIVFDGKRNNMPMKCIIDENNRIVTVTTKDYFSFKKCLVYLDENVLSSDILDLNADTSCDFESVTNSVYLIHDNIMYTYFSNTILLSDKGKVHEISARGLCAHILLYQMLTSGEYKQCLSDLLNSMMNRDKIPIYSHTERDKKPGRHGFINIEKDIIVF.

Residues D202 and D204 contribute to the active site. 3 residues coordinate Ca(2+): D202, D204, and D253.

It belongs to the poxviridae poly(A) polymerase catalytic subunit family. Heterodimer of a large (catalytic) subunit and a small (regulatory) subunit.

It catalyses the reaction RNA(n) + ATP = RNA(n)-3'-adenine ribonucleotide + diphosphate. Its function is as follows. Polymerase that creates the 3'-poly(A) tail of mRNA's. In Bos taurus (Bovine), this protein is Poly(A) polymerase catalytic subunit (OPG063).